The sequence spans 91 residues: Small ribosomal subunit protein uS19 (91 aa).

This sequence belongs to the universal ribosomal protein uS19 family.

In terms of biological role, protein S19 forms a complex with S13 that binds strongly to the 16S ribosomal RNA. The polypeptide is Small ribosomal subunit protein uS19 (Amoebophilus asiaticus (strain 5a2)).